A 638-amino-acid chain; its full sequence is MASGPNMEAPVCLVENENEELRVNSKAINILERITQPVVVVAIVGLYRTGKSYLMNRLAGQNHGFNLGTTVRSETKGIWMWCVPHPSKPKFTLVLLDTEGLGDVEKGDPKNDSWIFALAVLLSSTFVYNSMSTINHQALEQLHYVTELTERIRAKSTSRSEEVDDSDEFVSFFPDFIWTVRDFVLELKLEGRVITADEYLENALKLIPGMSIKAQKANLPRECIRHFFPRRKCFVFDRPTKDKELLVHVEEMPEDQLDHSFQVQSKEFCSYIFSNSKAKTLKEGIVVNGNRLATLVTTYVDAINSGDVPCLENAVTTLAQRENSIAVQKAADHYSEQMAQRMRLPTDTLQELLTVHTACEKEAIAVFMEHSFKDENQQFQKNLVVTIEEKKEDFLRQNEAASLSHCQAELDKLSESLRESISRGVFSVPGGHRLYLEARKKVEQDYERVPRKGVKANHVLQSFLQSQISIEDSIMQSDKALTDGQKAMEAERAQKEAAEKEQELLRQKQKELQQVMEAQERSYKENVAQLHEKMETERKNILREQEVKLEHKLKIQKDMLNEGFKRKCEAMDLEISQLQKEIQLNKEKNSSLGAKILDGFGDVLISVVPGSGKYFGLGLKILSSQMNQTQNSDKVRKL.

Positions 1–310 are GTPase domain (Globular); it reads MASGPNMEAP…DAINSGDVPC (310 aa). The GB1/RHD3-type G domain occupies 35-277; that stretch reads TQPVVVVAIV…FCSYIFSNSK (243 aa). GTP contacts are provided by residues 45 to 52, 67 to 69, and 97 to 101; these read GLYRTGKS, LGT, and DTEGL. The segment at 311–638 is interaction with the CYBA-CYBB complex; that stretch reads LENAVTTLAQ…TQNSDKVRKL (328 aa). Residues 590 to 638 are C-terminal tail; required for its localization to cytoplasmic vesicle; the sequence is SSLGAKILDGFGDVLISVVPGSGKYFGLGLKILSSQMNQTQNSDKVRKL.

This sequence belongs to the TRAFAC class dynamin-like GTPase superfamily. GB1/RHD3 GTPase family. GB1 subfamily. In terms of assembly, monomer and dimer. Interacts with CYBA, CYBA-CYBB complex and ATG4B. Interacts (via GB1/RHD3-type G domain) with NCF2 and NCF2-NCF4 complex.

Its subcellular location is the cytoplasmic vesicle membrane. The catalysed reaction is GTP + H2O = GDP + phosphate + H(+). The enzyme catalyses GDP + H2O = GMP + phosphate + H(+). Its activity is regulated as follows. Inhibited by orthovanadate, berylium fluoride and aluminum flouride. Functionally, interferon (IFN)-inducible GTPase that plays important roles in innate immunity against a diverse range of bacterial, viral and protozoan pathogens. Hydrolyzes GTP to GMP in two consecutive cleavage reactions and predominantly uses GTP and not GDP or GMP as the substrate. Following infection, recruited to the pathogen-containing vacuoles or vacuole-escaped bacteria and acts as a positive regulator of inflammasome assembly by promoting the release of inflammasome ligands from bacteria. Acts by promoting lysis of pathogen-containing vacuoles, releasing pathogens into the cytosol. Following pathogen release in the cytosol, promotes recruitment of proteins that mediate bacterial cytolysis, such as Gm12250/Irgb10: this liberates ligands that are detected by inflammasomes, such as lipopolysaccharide (LPS) that activates the non-canonical CASP4/CASP11 inflammasome or double-stranded DNA (dsDNA) that activates the AIM2 inflammasome. Also promotes IFN-gamma-mediated host defense against bacterial infections by regulating oxidative responses and bacteriolytic peptide generation. May help to assemble NADPH oxidase on phagosomal membranes by acting as a bridging protein between NADPH oxidase cytosolic subunits NCF2-NCF4 and the membrane subunits CYBA-CYBB. Participates along with GBP1 in trafficking monoubiquinated protein cargo to autolysosomes for generating ubiquitin-derived antimicrobial peptides. Facilitates influenza A virus replication by inhibiting the activation of NF-kappaB and JAK-STAT signaling pathways and the expression of type I, type III interferons and pro-inflammatory cytokines. Confers protection to several pathogens, including the bacterial pathogens Listeria monocytogenes and Mycobacterium bovis BCG as well as the protozoan pathogen Toxoplasma gondii. Required for disruption of the parasitophorous vacuole formed following T.gondii infection and subsequent killing of the parasite. In Mus musculus (Mouse), this protein is Guanylate-binding protein 7 (Gbp7).